Consider the following 608-residue polypeptide: Chaperone protein HtpG (608 aa).

The segment at 1-332 (MQFQTEVNQL…VEDLPLNVSR (332 aa)) is a; substrate-binding. The interval 333-536 (EILQENQILK…KNKPDFAMQQ (204 aa)) is b. The tract at residues 537 to 608 (LLKQMGQEQN…LTKIINKAFS (72 aa)) is c.

This sequence belongs to the heat shock protein 90 family. In terms of assembly, homodimer.

The protein resides in the cytoplasm. Molecular chaperone. Has ATPase activity. The polypeptide is Chaperone protein HtpG (Campylobacter jejuni (strain RM1221)).